A 283-amino-acid polypeptide reads, in one-letter code: Polyamine aminopropyltransferase (283 aa).

One can recognise a PABS domain in the interval 2–237 (ELWYTEEHTD…GHWLFGFASK (236 aa)). Position 31 (Q31) interacts with S-methyl-5'-thioadenosine. Spermidine is bound by residues H62 and D86. S-methyl-5'-thioadenosine contacts are provided by residues E106 and 137–138 (DG). The Proton acceptor role is filled by D155. 155 to 158 (DSTD) is a binding site for spermidine. Residue P162 participates in S-methyl-5'-thioadenosine binding.

It belongs to the spermidine/spermine synthase family. Homodimer or homotetramer.

The protein resides in the cytoplasm. The catalysed reaction is S-adenosyl 3-(methylsulfanyl)propylamine + putrescine = S-methyl-5'-thioadenosine + spermidine + H(+). The protein operates within amine and polyamine biosynthesis; spermidine biosynthesis; spermidine from putrescine: step 1/1. Its function is as follows. Catalyzes the irreversible transfer of a propylamine group from the amino donor S-adenosylmethioninamine (decarboxy-AdoMet) to putrescine (1,4-diaminobutane) to yield spermidine. The protein is Polyamine aminopropyltransferase of Clostridium perfringens (strain ATCC 13124 / DSM 756 / JCM 1290 / NCIMB 6125 / NCTC 8237 / Type A).